The following is a 155-amino-acid chain: Large ribosomal subunit protein eL24 (155 aa).

Basic and acidic residues predominate over residues 93 to 123; it reads KRNARPETRNATRAKHAEAAKERKEKEAERR. The interval 93 to 155 is disordered; it reads KRNARPETRN…SAPKVQATSR (63 aa).

Belongs to the eukaryotic ribosomal protein eL24 family.

This Yarrowia lipolytica (strain CLIB 122 / E 150) (Yeast) protein is Large ribosomal subunit protein eL24 (RPL24).